Reading from the N-terminus, the 465-residue chain is Lysophospholipid acyltransferase 2 (465 aa).

9 consecutive transmembrane segments (helical) span residues 15–35 (VSVA…ISFL), 55–75 (FLSY…PMTI), 86–106 (LSGF…HVFY), 161–181 (SLIE…GPVF), 214–234 (AVFQ…QFPL), 266–286 (YFIW…FSGW), 356–376 (AVWH…ALMI), 399–419 (VLVL…SVGF), and 434–454 (VYYI…LVPV). Residue His-359 is part of the active site.

It belongs to the membrane-bound acyltransferase family. In terms of assembly, interacts with GPAT9 and DGAT1. As to expression, expressed in rosette leaves, pollen grains, developing embryos and developing seeds.

The protein resides in the endoplasmic reticulum membrane. The catalysed reaction is a 1-acyl-sn-glycero-3-phosphocholine + an acyl-CoA = a 1,2-diacyl-sn-glycero-3-phosphocholine + CoA. It carries out the reaction 1-(9Z-octadecenoyl)-sn-glycero-3-phosphocholine + (9Z)-octadecenoyl-CoA = 1,2-di-(9Z-octadecenoyl)-sn-glycero-3-phosphocholine + CoA. The enzyme catalyses 1-(9Z-octadecenoyl)-sn-glycero-3-phosphocholine + (9Z,12Z)-octadecadienoyl-CoA = 1-(9Z)-octadecenoyl-2-(9Z,12Z)-octadecadienoyl-sn-glycero-3-phosphocholine + CoA. It catalyses the reaction (9Z,12Z,15Z)-octadecatrienoyl-CoA + 1-(9Z-octadecenoyl)-sn-glycero-3-phosphocholine = 1-(9Z-octadecaenoyl)-2-(9Z,12Z,15Z-octadecatrienoyl)-sn-glycero-3-phosphocholine + CoA. The catalysed reaction is a 1-acyl-sn-glycero-3-phosphoethanolamine + an acyl-CoA = a 1,2-diacyl-sn-glycero-3-phosphoethanolamine + CoA. It carries out the reaction a 1-acyl-sn-glycero-3-phospho-L-serine + an acyl-CoA = a 1,2-diacyl-sn-glycero-3-phospho-L-serine + CoA. In terms of biological role, lysophospholipid acyltransferase with broad specificity. Mediates the conversion of lysophosphatidylethanolamine (1-acyl-sn-glycero-3-phosphoethanolamine or LPE) into phosphatidylethanolamine (1,2-diacyl-sn-glycero-3-phosphoethanolamine or PE) (LPEAT activity). Catalyzes the acylation of lysophosphatidylserine (1-acyl-2-hydroxy-sn-glycero-3-phospho-L-serine or LPS) into phosphatidylserine (1,2-diacyl-sn-glycero-3-phospho-L-serine or PS) (LPSAT activity). Can convert lysophosphatidylcholine (1-acyl-sn-glycero-3-phosphocholine or LPC) into phosphatidylcholine (1,2-diacyl-sn-glycero-3-phosphocholine or PC) (LPCAT activity). Exhibits preference for C18-unsaturated acyl-CoA when transferring an acyl group to lysophosphatidylcholine. Can also utilize lysophosphatidylglycerol (LPG) as substrate in vitro. Has neither activity towards lysophosphatidic acid (LPA) nor lysophosphatidylinositol (LPI). Lysophospholipid acyltransferases catalyze the reacylation step of the phospholipid remodeling pathway also known as the Lands cycle. The primary function of the Lands cycle is to provide a route for acyl remodeling to modify fatty acid (FA) composition of phospholipids derived from the Kennedy pathway. Is involved in PC acyl editing and phosphocholine headgroup exchange between PC and diacylglycerols. This processes control the majority of acyl fluxes through PC to provide polyunsaturated fatty acids for triacylglycerols synthesis in seeds. Involved with LPCAT1 in the direct incorporation of newly synthesized fatty acids exported form the chloroplast into PC through acyl editing. This is Lysophospholipid acyltransferase 2 from Arabidopsis thaliana (Mouse-ear cress).